The chain runs to 689 residues: Outer spore wall assembly protein SHE10 (689 aa).

Positions 1–18 (MKILTKFFLLLVVTTCSL) are cleaved as a signal peptide. The interval 259–308 (TKAKSKSKPRVNASASARGNARAGAKAGAKAGTSEISASATADPTTSASA) is disordered. Residues 270-308 (NASASARGNARAGAKAGAKAGTSEISASATADPTTSASA) are compositionally biased toward low complexity. A coiled-coil region spans residues 406–435 (NKTKTVSEVLQNRYKNLNRAIQDINCTCET). Residues 610-626 (EQESKQREDSPRMDRDS) are compositionally biased toward basic and acidic residues. The interval 610–689 (EQESKQREDS…TVQNNVTLQI (80 aa)) is disordered. Polar residues-rich tracts occupy residues 627–637 (TQNVENSNTTT), 655–670 (QNGT…GPDS), and 677–689 (METT…TLQI).

Belongs to the SHE10 family. Component of the mitochondria-localized RNase mitochondrial RNA-processing (RNase MRP) composed of one single RNA encoded by the NME1 gene and at least 31 proteins. Absent in the nucleus-localized RNase MRP (NuMRP).

Its subcellular location is the mitochondrion. Involved in spore wall assembly. May be a component of the mitochondrial RNase MRP (MtMRP), a ribonucleoprotein endoribonuclease involved in the cleaving RNA transcripts to generate primers for DNA replication in mitochondria. The polypeptide is Outer spore wall assembly protein SHE10 (Zygosaccharomyces rouxii (strain ATCC 2623 / CBS 732 / NBRC 1130 / NCYC 568 / NRRL Y-229)).